Here is a 191-residue protein sequence, read N- to C-terminus: Large ribosomal subunit protein eL6 (191 aa).

Belongs to the eukaryotic ribosomal protein eL6 family.

This is Large ribosomal subunit protein eL6 (RPL6) from Tetrahymena thermophila (strain SB210).